The following is a 66-amino-acid chain: Small ribosomal subunit protein bS21 (66 aa).

It belongs to the bacterial ribosomal protein bS21 family.

This chain is Small ribosomal subunit protein bS21, found in Rickettsia peacockii (strain Rustic).